The sequence spans 269 residues: MSKFLQGSIFSISKLHVRYSSTRPFLVAPSIANSITTEAPAINHSPELANARKWLPKRCGLITRKKGMMPYFDKSTGERSAATILEVNNVEVIMHRTSEVNGYFACQVGYGSRHLSKVSRQMLGHFASKVVNPKEHVAEFRVKDEKGLIPPGTLLKPSFFKEGQYVDVRSVSKGKGFTGVMKRYGFKGLRASHGTSIMHRHGGSYGQNQDPGRVLPGRKMPGHMGNEHVTIQNVKVLKVDDENNVIWVKGSVAGPKNSFVKIQDAIKKT.

The transit peptide at 1-19 (MSKFLQGSIFSISKLHVRY) directs the protein to the mitochondrion.

It belongs to the universal ribosomal protein uL3 family. In terms of assembly, component of the mitochondrial large ribosomal subunit (mt-LSU). Mature yeast 74S mitochondrial ribosomes consist of a small (37S) and a large (54S) subunit. The 37S small subunit contains a 15S ribosomal RNA (15S mt-rRNA) and 34 different proteins. The 54S large subunit contains a 21S rRNA (21S mt-rRNA) and 46 different proteins.

The protein localises to the mitochondrion. Component of the mitochondrial ribosome (mitoribosome), a dedicated translation machinery responsible for the synthesis of mitochondrial genome-encoded proteins, including at least some of the essential transmembrane subunits of the mitochondrial respiratory chain. The mitoribosomes are attached to the mitochondrial inner membrane and translation products are cotranslationally integrated into the membrane. In Saccharomyces cerevisiae (strain ATCC 204508 / S288c) (Baker's yeast), this protein is Large ribosomal subunit protein uL3m (MRPL9).